Consider the following 212-residue polypeptide: Methylthioribulose-1-phosphate dehydratase (212 aa).

2 residues coordinate Zn(2+): His97 and His99.

It belongs to the aldolase class II family. MtnB subfamily. As to quaternary structure, homotetramer. Requires Zn(2+) as cofactor.

The catalysed reaction is 5-(methylsulfanyl)-D-ribulose 1-phosphate = 5-methylsulfanyl-2,3-dioxopentyl phosphate + H2O. The protein operates within amino-acid biosynthesis; L-methionine biosynthesis via salvage pathway; L-methionine from S-methyl-5-thio-alpha-D-ribose 1-phosphate: step 2/6. Catalyzes the dehydration of methylthioribulose-1-phosphate (MTRu-1-P) into 2,3-diketo-5-methylthiopentyl-1-phosphate (DK-MTP-1-P). The sequence is that of Methylthioribulose-1-phosphate dehydratase from Bacillus cereus (strain G9842).